Consider the following 207-residue polypeptide: Large ribosomal subunit protein bL25 (207 aa).

The protein belongs to the bacterial ribosomal protein bL25 family. CTC subfamily. Part of the 50S ribosomal subunit; part of the 5S rRNA/L5/L18/L25 subcomplex. Contacts the 5S rRNA. Binds to the 5S rRNA independently of L5 and L18.

In terms of biological role, this is one of the proteins that binds to the 5S RNA in the ribosome where it forms part of the central protuberance. The chain is Large ribosomal subunit protein bL25 from Dictyoglomus thermophilum (strain ATCC 35947 / DSM 3960 / H-6-12).